The following is a 249-amino-acid chain: Vesicle-associated membrane protein-associated protein A (249 aa).

Position 2 is an N-acetylalanine (A2). The Cytoplasmic portion of the chain corresponds to 2-227 (ASASGTMAKH…VSFRENVTSP (226 aa)). The region spanning 14–131 (ILVLDPPTDL…MDSKLRCVFE (118 aa)) is the MSP domain. Residues 50–53 (KVKT) are phosphorylated FFAT motif binding. K125 is modified (N6-acetyllysine). At S166 the chain carries Phosphoserine. A coiled-coil region spans residues 169 to 205 (DTETRKLVEECKRLQGEMMKLSEENRLLRDEGLRLRK). T170 carries the post-translational modification Phosphothreonine. Phosphoserine is present on residues S214, S216, and S219. A helical; Anchor for type IV membrane protein membrane pass occupies residues 228–248 (LPSLLVVIAAIFIGFFLGKFI).

This sequence belongs to the VAMP-associated protein (VAP) (TC 9.B.17) family. Homodimer; disulfide-linked. Heterodimer with VAPB. Interacts with VAMP1, VAMP2, STX1A, BET1, SEC22C and with the C-terminal domain of OCLN. Interacts (via MSP domain) with OSBPL1A (via FFAT motif). Interacts (via MSP domain) with ZFYVE27; may retain ZFYVE27 in the endoplasmic reticulum and regulate its function in cell projections formation. Interacts with OSBP. Interacts (via C-terminus) with RSAD2/viperin (via C-terminus). Interacts with IFITM3. Interacts with OSBPL3 (phosphorylated form). Interacts with KIF5A in a ZFYVE27-dependent manner. Interacts (via MSP domain) with STARD3 (via phosphorylated FFAT motif); this interaction recruits VAPA to the endosome. Interacts with STARD3NL (via FFAT motif). Interacts with CERT1. Interacts with PLEKHA3 and SACM1L to form a ternary complex. Interacts with VPS13A (via FFAT motif). Interacts with RB1CC1 (via phosphorylated FFAT motif), MIGA2 (via phosphorylated FFAT motif), RMDN3 (via phosphorylated FFAT motif), KCNB1 (via phosphorylated FFAT motif) and KCNB2 (via phosphorylated FFAT motif). Interacts (via MSP domain) with WDR44 (via FFAT-like motif); the interactions connect the endoplasmic reticulum (ER) with the endosomal tubule.

It localises to the endoplasmic reticulum membrane. It is found in the cell junction. The protein resides in the tight junction. Its subcellular location is the cell membrane. Functionally, endoplasmic reticulum (ER)-anchored protein that mediates the formation of contact sites between the ER and endosomes via interaction with FFAT motif-containing proteins such as STARD3 or WDR44. STARD3-VAPA interaction enables cholesterol transfer from the ER to endosomes. Via interaction with WDR44 participates in neosynthesized protein export. In addition, recruited to the plasma membrane through OSBPL3 binding. The OSBPL3-VAPA complex stimulates RRAS signaling which in turn attenuates integrin beta-1 (ITGB1) activation at the cell surface. With OSBPL3, may regulate ER morphology. May play a role in vesicle trafficking. This Bos taurus (Bovine) protein is Vesicle-associated membrane protein-associated protein A.